The sequence spans 1221 residues: DNA-directed RNA polymerase subunit beta' (1221 aa).

Residues Cys60, Cys62, Cys75, and Cys78 each coordinate Zn(2+). The Mg(2+) site is built by Asp449, Asp451, and Asp453. Positions 821, 896, 903, and 906 each coordinate Zn(2+).

Belongs to the RNA polymerase beta' chain family. As to quaternary structure, the RNAP catalytic core consists of 2 alpha, 1 beta, 1 beta' and 1 omega subunit. When a sigma factor is associated with the core the holoenzyme is formed, which can initiate transcription. Mg(2+) is required as a cofactor. The cofactor is Zn(2+).

It catalyses the reaction RNA(n) + a ribonucleoside 5'-triphosphate = RNA(n+1) + diphosphate. DNA-dependent RNA polymerase catalyzes the transcription of DNA into RNA using the four ribonucleoside triphosphates as substrates. In Lactobacillus delbrueckii subsp. bulgaricus (strain ATCC 11842 / DSM 20081 / BCRC 10696 / JCM 1002 / NBRC 13953 / NCIMB 11778 / NCTC 12712 / WDCM 00102 / Lb 14), this protein is DNA-directed RNA polymerase subunit beta'.